A 1315-amino-acid polypeptide reads, in one-letter code: Myopalladin (1315 aa).

Disordered stretches follow at residues 19 to 60 (SYLA…DLPD), 81 to 145 (INHD…TQSK), 166 to 204 (HSSKRIRPRACKNHKSKTESQNKVLQENSPTFSDLTERR), and 230 to 266 (EAKRREAELAAGEAAAGDSTPGSSPSSLYYEEPLGQP). Composition is skewed to basic and acidic residues over residues 23–35 (ETRHRGDNERSRA) and 84–104 (DPLERVDEAQARKRLSSDQTK). Phosphoserine occurs at positions 99 and 129. Positions 166–180 (HSSKRIRPRACKNHK) are enriched in basic residues. Residues 184-199 (ESQNKVLQENSPTFSD) are compositionally biased toward polar residues. A coiled-coil region spans residues 219–240 (DNELNHAIEQREAKRREAELAA). Phosphothreonine is present on Thr249. Residues 267–357 (PRFTQKLRSR…DSTSAEIYIE (91 aa)) enclose the Ig-like 1 domain. Residues Cys288 and Cys339 are joined by a disulfide bond. The disordered stretch occupies residues 359–392 (VSSSDSEGDPNKEEMNRIQKPNEVSSPPTTSAAI). Residues 432-528 (PVFTKMLQNL…GTVSSIAQLD (97 aa)) enclose the Ig-like 2 domain. Cys453 and Cys512 form a disulfide bridge. Disordered stretches follow at residues 535–652 (ISDN…VLAK), 674–704 (LQNTSPSSPKESLHMSALNSAPPAVTISSKQ), and 725–747 (SSTSTATVSPSSSPVFTLSNTPQ). Residues 609-623 (SSGSGAANTSQTRPN) show a composition bias toward polar residues. Ser641 is modified (phosphoserine). The span at 725–741 (SSTSTATVSPSSSPVFT) shows a compositional bias: low complexity. Phosphoserine is present on Ser754. 2 disordered regions span residues 762–814 (HPST…TPVS) and 840–865 (NAMGLPKSAPSVPSQGLMKKTTKAPQ). Over residues 779 to 790 (PAPPSPAEPAAP) the composition is skewed to pro residues. A phosphoserine mark is found at Ser809 and Ser814. Phosphoserine is present on residues Ser903 and Ser924. 3 Ig-like domains span residues 941–1025 (PIFD…GRIS), 1068–1157 (PHFL…LELT), and 1167–1257 (PVIL…ARLD). Cys1089 and Cys1141 are disulfide-bonded.

The protein belongs to the myotilin/palladin family. As to quaternary structure, interacts with TTN/titin, NEB, NEBL, ACTN2 and CARP.

The protein resides in the cytoplasm. The protein localises to the nucleus. It is found in the myofibril. It localises to the sarcomere. Its subcellular location is the z line. Its function is as follows. Component of the sarcomere that tethers together nebulin (skeletal muscle) and nebulette (cardiac muscle) to alpha-actinin, at the Z lines. This Mus musculus (Mouse) protein is Myopalladin (Mypn).